Consider the following 208-residue polypeptide: GTP cyclohydrolase 1 (208 aa).

Zn(2+) is bound by residues Cys98, His101, and Cys169.

The protein belongs to the GTP cyclohydrolase I family. In terms of assembly, toroid-shaped homodecamer, composed of two pentamers of five dimers.

The enzyme catalyses GTP + H2O = 7,8-dihydroneopterin 3'-triphosphate + formate + H(+). It participates in cofactor biosynthesis; 7,8-dihydroneopterin triphosphate biosynthesis; 7,8-dihydroneopterin triphosphate from GTP: step 1/1. The protein is GTP cyclohydrolase 1 of Agrobacterium fabrum (strain C58 / ATCC 33970) (Agrobacterium tumefaciens (strain C58)).